We begin with the raw amino-acid sequence, 769 residues long: Glutathione biosynthesis bifunctional protein GshAB (769 aa).

The segment at 1–347 (MLDSFKEDPN…QLADENENNI (347 aa)) is glutamate--cysteine ligase. One can recognise an ATP-grasp domain in the interval 514-768 (KLVLAEHDIR…IGDKILDFLF (255 aa)). 541-599 (SLFEDKQIVVKPKSTNYGWGISIFKNKFTLEDYQEALNIAFSYDSSVIIEEFIPGDEFR) serves as a coordination point for ATP. Mg(2+) contacts are provided by Asp-721, Glu-738, and Asn-740. Mn(2+) is bound by residues Asp-721, Glu-738, and Asn-740.

This sequence in the N-terminal section; belongs to the glutamate--cysteine ligase type 1 family. Type 2 subfamily. Monomer. Mg(2+) serves as cofactor. Requires Mn(2+) as cofactor.

The enzyme catalyses L-cysteine + L-glutamate + ATP = gamma-L-glutamyl-L-cysteine + ADP + phosphate + H(+). The catalysed reaction is gamma-L-glutamyl-L-cysteine + glycine + ATP = glutathione + ADP + phosphate + H(+). It functions in the pathway sulfur metabolism; glutathione biosynthesis; glutathione from L-cysteine and L-glutamate: step 1/2. The protein operates within sulfur metabolism; glutathione biosynthesis; glutathione from L-cysteine and L-glutamate: step 2/2. Its function is as follows. Synthesizes glutathione from L-glutamate and L-cysteine via gamma-L-glutamyl-L-cysteine. This Listeria monocytogenes serovar 1/2a (strain ATCC BAA-679 / EGD-e) protein is Glutathione biosynthesis bifunctional protein GshAB.